The sequence spans 739 residues: G2 and S phase-expressed protein 1 (739 aa).

Basic and acidic residues predominate over residues 1 to 11 (MEGGGGRDEPS). A disordered region spans residues 1 to 20 (MEGGGGRDEPSACRAGDVNM). A Phosphoserine modification is found at serine 91. Disordered stretches follow at residues 116–136 (SRNQ…GVER), 149–306 (EKEK…AIPV), and 320–639 (PGST…GDAA). Residues 149–165 (EKEKEMKKSPTSLKRET) show a composition bias toward basic and acidic residues. The residue at position 157 (serine 157) is a Phosphoserine. Threonine 159 carries the post-translational modification Phosphothreonine. Residues serine 171, serine 187, serine 208, serine 247, and serine 262 each carry the phosphoserine modification. Residues 181-195 (PRLLASSPALPSSGA) are compositionally biased toward low complexity. Over residues 268–280 (IPAEKESHRDVLP) the composition is skewed to basic and acidic residues. 2 stretches are compositionally biased toward low complexity: residues 284-294 (APGAVNVPAAG) and 330-342 (SSSG…ASSA). A Phosphoserine modification is found at serine 331. A compositionally biased stretch (polar residues) spans 360-372 (PANSSRPLSNISK). Residues 411 to 424 (TAPPSASPTQPQTP) show a composition bias toward low complexity. Polar residues-rich tracts occupy residues 430 to 446 (WLNS…LNKT) and 455 to 470 (CLNS…TNQF). Serine 480 bears the Phosphoserine mark. Residues 481–522 (PDSSTPKLSRAQRPQSCTSVGRVTVHSTPVRRSSGPAPQSLL) are compositionally biased toward polar residues. A Phosphothreonine modification is found at threonine 485. Phosphoserine occurs at positions 496, 499, 514, 520, 523, and 528. Threonine 532 carries the phosphothreonine modification. Residues serine 535 and serine 555 each carry the phosphoserine modification. Basic and acidic residues predominate over residues 577 to 590 (EPTRESNRKTDSRL). Serine 594 and serine 611 each carry phosphoserine. Threonine 696 is subject to Phosphothreonine. A phosphoserine mark is found at serine 707, serine 717, serine 718, serine 724, and serine 734.

Phosphorylated in mitosis.

The protein resides in the cytoplasm. It localises to the cytoskeleton. May be involved in p53-induced cell cycle arrest in G2/M phase by interfering with microtubule rearrangements that are required to enter mitosis. Overexpression delays G2/M phase progression. In Homo sapiens (Human), this protein is G2 and S phase-expressed protein 1.